Reading from the N-terminus, the 277-residue chain is uncharacterized protein (277 aa).

Solcar repeat units follow at residues 1 to 84 (MDQA…SKRV), 96 to 179 (ISVL…LKLW), and 184 to 268 (PTSL…VGMH). 6 helical membrane passes run 3-24 (QAIA…LDLA), 60-80 (LSIN…IYDF), 102-122 (LCSS…IWVV), 152-172 (CYAG…QFMA), 190-210 (IFMS…LLVI), and 240-261 (FYKG…TFLV).

Belongs to the mitochondrial carrier (TC 2.A.29) family.

Its subcellular location is the mitochondrion inner membrane. This is an uncharacterized protein from Schizosaccharomyces pombe (strain 972 / ATCC 24843) (Fission yeast).